Reading from the N-terminus, the 390-residue chain is Protein shisa-9 (390 aa).

The signal sequence occupies residues 1–22 (MTGIRAIFYYFLVDLLTLLCWA). At 23–134 (QGKGGQHFGS…DPSHDPTRDK (112 aa)) the chain is on the extracellular side. Asparagine 40 and asparagine 74 each carry an N-linked (GlcNAc...) asparagine glycan. The helical transmembrane segment at 135–155 (TNLIVYIICGVVAVMVLVGIF) threads the bilayer. The Cytoplasmic segment spans residues 156-390 (TKLGLEKAHR…VTNSKTEVTV (235 aa)).

This sequence belongs to the shisa family. SHISA9 subfamily. As to quaternary structure, component of some AMPA receptors (ionotropic glutamate receptors) complex.

It is found in the cell projection. The protein localises to the dendritic spine membrane. It localises to the synapse. In terms of biological role, regulator of short-term neuronal synaptic plasticity in the dentate gyrus. Associates with AMPA receptors (ionotropic glutamate receptors) in synaptic spines and promotes AMPA receptor desensitization at excitatory synapses. This chain is Protein shisa-9 (shisa9), found in Xenopus tropicalis (Western clawed frog).